We begin with the raw amino-acid sequence, 34 residues long: Photosystem I reaction center subunit XII (34 aa).

The helical transmembrane segment at 9-29 (LIALSLIVVVHAGVLALRLGI) threads the bilayer.

It belongs to the PsaM family.

Its subcellular location is the cellular thylakoid membrane. The chain is Photosystem I reaction center subunit XII from Prochlorococcus marinus (strain MIT 9312).